The following is a 304-amino-acid chain: ATP phosphoribosyltransferase (304 aa).

This sequence belongs to the ATP phosphoribosyltransferase family. Long subfamily. Mg(2+) serves as cofactor.

Its subcellular location is the cytoplasm. It catalyses the reaction 1-(5-phospho-beta-D-ribosyl)-ATP + diphosphate = 5-phospho-alpha-D-ribose 1-diphosphate + ATP. It functions in the pathway amino-acid biosynthesis; L-histidine biosynthesis; L-histidine from 5-phospho-alpha-D-ribose 1-diphosphate: step 1/9. Its activity is regulated as follows. Feedback inhibited by histidine. Catalyzes the condensation of ATP and 5-phosphoribose 1-diphosphate to form N'-(5'-phosphoribosyl)-ATP (PR-ATP). Has a crucial role in the pathway because the rate of histidine biosynthesis seems to be controlled primarily by regulation of HisG enzymatic activity. The protein is ATP phosphoribosyltransferase of Xanthomonas oryzae pv. oryzae (strain MAFF 311018).